The sequence spans 135 residues: Class I hydrophobin dewB (135 aa).

A signal peptide spans 1-17 (MKFIGLATLSLFALASA). Intrachain disulfides connect cysteine 35/cysteine 109, cysteine 43/cysteine 103, cysteine 44/cysteine 84, and cysteine 110/cysteine 128.

It belongs to the fungal hydrophobin family. Self-assembles to form functional amyloid fibrils called rodlets. Self-assembly into fibrillar rodlets occurs spontaneously at hydrophobic:hydrophilic interfaces and the rodlets further associate laterally to form amphipathic monolayers.

It localises to the secreted. Its subcellular location is the spore wall. Its function is as follows. Aerial growth, conidiation, and dispersal of filamentous fungi in the environment rely upon a capability of their secreting small amphipathic proteins called hydrophobins (HPBs) with low sequence identity. Class I can self-assemble into an outermost layer of rodlet bundles on aerial cell surfaces, conferring cellular hydrophobicity that supports fungal growth, development and dispersal; whereas Class II form highly ordered films at water-air interfaces through intermolecular interactions but contribute nothing to the rodlet structure. DewB is a class I hydrophobin that contributes to the hydrophobicity of the spore surface. The chain is Class I hydrophobin dewB from Emericella nidulans (strain FGSC A4 / ATCC 38163 / CBS 112.46 / NRRL 194 / M139) (Aspergillus nidulans).